Reading from the N-terminus, the 97-residue chain is Eclosion hormone (97 aa).

A signal peptide spans 1–17 (MNCKPLILCTFVAVAMC). 3 cysteine pairs are disulfide-bonded: Cys48–Cys72, Cys52–Cys68, and Cys55–Cys83.

It belongs to the insect eclosion hormone family. As to expression, expressed in a single pair of brain neurons which extend their processes the entire length of the central nervous system and also to the corpora cardiaca portion of the ring gland. These cells show massive depletion of immunoreactive Eh at ecdysis.

It is found in the secreted. Neuropeptide that triggers the performance of ecdysis behaviors at the end of a molt. It triggers adult behavior patterns: larval, pupal and adult ecdysis, and plasticization during the molt. The chain is Eclosion hormone (Eh) from Drosophila melanogaster (Fruit fly).